The sequence spans 369 residues: P2X receptor B (369 aa).

The Cytoplasmic segment spans residues 1–25 (MTIDWDSILSYNTIKVVRIRDRRLG). Residues 26 to 46 (ILHLCFLIVIVLYVVVYSAII) traverse the membrane as a helical segment. At 47-369 (KKGYVTTEEP…DKLYHNIEAL (323 aa)) the chain is on the lumenal side. The interval 283–296 (RHAIRLIFIQTGVI) is pore-forming motif.

It belongs to the P2X receptor family.

The protein resides in the contractile vacuole membrane. Its function is as follows. P2X receptors are ATP-gated ion channels that play a role in intracellular calcium signaling. Not required for the purinergic response to extracellular nucleotides. Not essential for osmoregulation. Inward currents are evoked by intracellular ATP and ATP analogs. Insensitive to the P2 receptor antagonists PPADS and suramin, and also copper ions. Inhibited by sodium ions. Permeable to chloride ions. This chain is P2X receptor B (p2xB), found in Dictyostelium discoideum (Social amoeba).